The following is a 218-amino-acid chain: Elongation factor Ts (218 aa).

The segment at Thr82–Val85 is involved in Mg(2+) ion dislocation from EF-Tu.

It belongs to the EF-Ts family.

It is found in the cytoplasm. Associates with the EF-Tu.GDP complex and induces the exchange of GDP to GTP. It remains bound to the aminoacyl-tRNA.EF-Tu.GTP complex up to the GTP hydrolysis stage on the ribosome. The chain is Elongation factor Ts from Prochlorococcus marinus (strain NATL2A).